An 82-amino-acid polypeptide reads, in one-letter code: Small ribosomal subunit protein bS18 (82 aa).

Residues 1–20 (MVDINQIPTRRPFHRRRKTC) are disordered.

This sequence belongs to the bacterial ribosomal protein bS18 family. In terms of assembly, part of the 30S ribosomal subunit. Forms a tight heterodimer with protein bS6.

In terms of biological role, binds as a heterodimer with protein bS6 to the central domain of the 16S rRNA, where it helps stabilize the platform of the 30S subunit. In Chelativorans sp. (strain BNC1), this protein is Small ribosomal subunit protein bS18.